Consider the following 490-residue polypeptide: Histone-lysine N-methyltransferase SMYD1 (490 aa).

One can recognise an SET domain in the interval 7-253; sequence ENVEVFTAEG…EGEELTVSYI (247 aa). 17–19 is an S-adenosyl-L-methionine binding site; that stretch reads KGR. Cys-52, Cys-55, Cys-65, Cys-68, Cys-74, Cys-78, His-86, and Cys-90 together coordinate Zn(2+). The MYND-type zinc finger occupies 52–90; it reads CHTCFKRQEKLHRCGQCKFAHYCDRTCQKDAWLNHKNEC. S-adenosyl-L-methionine contacts are provided by residues His-135 and 205–206; that span reads NH. Cys-208 provides a ligand contact to Zn(2+). Residue 270–272 coordinates S-adenosyl-L-methionine; the sequence is YYF. Positions 274, 276, and 279 each coordinate Zn(2+).

Belongs to the class V-like SAM-binding methyltransferase superfamily. In terms of assembly, interacts with HDAC1, HDAC2 and HDAC3. Interacts (via MYND-type zinc finger) with NACA isoform skNAC. Expression seems mostly restricted to heart and skeletal muscle.

Its subcellular location is the cytoplasm. It localises to the nucleus. It catalyses the reaction L-lysyl(4)-[histone H3] + 3 S-adenosyl-L-methionine = N(6),N(6),N(6)-trimethyl-L-lysyl(4)-[histone H3] + 3 S-adenosyl-L-homocysteine + 3 H(+). Methylates histone H3 at 'Lys-4' (H3K4me), seems able to perform both mono-, di-, and trimethylation. Acts as a transcriptional repressor. Essential for cardiomyocyte differentiation and cardiac morphogenesis. The sequence is that of Histone-lysine N-methyltransferase SMYD1 (SMYD1) from Homo sapiens (Human).